The following is a 128-amino-acid chain: UPF0212 protein TGAM_1344 (128 aa).

Belongs to the UPF0212 family.

This chain is UPF0212 protein TGAM_1344, found in Thermococcus gammatolerans (strain DSM 15229 / JCM 11827 / EJ3).